Here is a 218-residue protein sequence, read N- to C-terminus: Ras-related protein R-Ras (218 aa).

The tract at residues 1 to 30 (MSSGAASGTGRGRPRGGGPGPRDPPPGETH) is disordered. Residues 7–20 (SGTGRGRPRGGGPG) show a composition bias toward gly residues. 36-44 (GGGGVGKSA) contributes to the GTP binding site. The Effector region signature appears at 58–66 (YDPTIEDSY). GTP contacts are provided by residues 83–87 (DTAGQ), 142–145 (NKAD), and 172–174 (SAK). C215 carries the post-translational modification Cysteine methyl ester. The S-geranylgeranyl cysteine moiety is linked to residue C215. Residues 216-218 (VLL) constitute a propeptide, removed in mature form.

Belongs to the small GTPase superfamily. Ras family. Interacts with PLCE1. Interacts (active GTP-bound form preferentially) with RGS14. Interacts with OSBPL3. Interacts with ZDHHC19. Post-translationally, S-palmitoylated by ZDHHC19, leading to increased association with membranes and with rafts/caveolae as well as enhanced cell viability.

Its subcellular location is the cell membrane. It catalyses the reaction GTP + H2O = GDP + phosphate + H(+). Its function is as follows. GTP-binding protein with GTPase activity, likely involved in the regulation of MAPK signaling pathway and thereby controlling multiple cellular processes. Regulates the organization of the actin cytoskeleton. With OSPBL3, modulates integrin beta-1 (ITGB1) activity. The chain is Ras-related protein R-Ras (Rras) from Rattus norvegicus (Rat).